Reading from the N-terminus, the 185-residue chain is Photosystem I assembly protein Ycf4 (185 aa).

2 consecutive transmembrane segments (helical) span residues 21 to 43 and 63 to 85; these read NFFW…ASSY and GVVM…CTIL.

The protein belongs to the Ycf4 family.

It is found in the plastid. The protein resides in the chloroplast thylakoid membrane. Its function is as follows. Seems to be required for the assembly of the photosystem I complex. The sequence is that of Photosystem I assembly protein Ycf4 from Saccharum hybrid (Sugarcane).